The chain runs to 373 residues: D-alanine--D-alanine ligase (373 aa).

An ATP-grasp domain is found at K165–A369. An ATP-binding site is contributed by K192–E247. Positions 324, 336, and 338 each coordinate Mg(2+).

The protein belongs to the D-alanine--D-alanine ligase family. Mg(2+) serves as cofactor. It depends on Mn(2+) as a cofactor.

Its subcellular location is the cytoplasm. It catalyses the reaction 2 D-alanine + ATP = D-alanyl-D-alanine + ADP + phosphate + H(+). It functions in the pathway cell wall biogenesis; peptidoglycan biosynthesis. Cell wall formation. This chain is D-alanine--D-alanine ligase, found in Corynebacterium jeikeium (strain K411).